The following is a 347-amino-acid chain: Single-pass membrane and coiled-coil domain-containing protein 2 (347 aa).

Residues M1 to V89 are disordered. Basic and acidic residues-rich tracts occupy residues G10–D21, E36–S51, and Y60–E86. Residues D139–M238 are a coiled coil. S178 carries the phosphoserine modification. Residues G243–P274 are disordered. The span at D253 to L262 shows a compositional bias: acidic residues. Over residues V263–S273 the composition is skewed to low complexity. The helical transmembrane segment at L288–D308 threads the bilayer.

It localises to the membrane. The protein is Single-pass membrane and coiled-coil domain-containing protein 2 (Smco2) of Mus musculus (Mouse).